Here is a 398-residue protein sequence, read N- to C-terminus: Phosphoglycerate kinase (398 aa).

Substrate contacts are provided by residues 21–23 (DFN), Arg-36, 59–62 (HLGR), Arg-119, and Arg-157. Residues Lys-208, Gly-296, Glu-327, and 354–357 (GGDS) each bind ATP.

This sequence belongs to the phosphoglycerate kinase family. In terms of assembly, monomer.

The protein resides in the cytoplasm. It carries out the reaction (2R)-3-phosphoglycerate + ATP = (2R)-3-phospho-glyceroyl phosphate + ADP. It functions in the pathway carbohydrate degradation; glycolysis; pyruvate from D-glyceraldehyde 3-phosphate: step 2/5. This is Phosphoglycerate kinase from Streptococcus equi subsp. zooepidemicus (strain H70).